The following is a 448-amino-acid chain: Probable D-serine dehydratase (448 aa).

Residue Lys-119 is modified to N6-(pyridoxal phosphate)lysine.

Belongs to the serine/threonine dehydratase family. DsdA subfamily. Pyridoxal 5'-phosphate serves as cofactor.

The catalysed reaction is D-serine = pyruvate + NH4(+). The sequence is that of Probable D-serine dehydratase from Chromobacterium violaceum (strain ATCC 12472 / DSM 30191 / JCM 1249 / CCUG 213 / NBRC 12614 / NCIMB 9131 / NCTC 9757 / MK).